The chain runs to 275 residues: MANFTAADVKRLRELTGAGMLDCKNALAESDGDFDKAVEALRIKGAKDVGKRAERATAEGLVAAQGGALIELNSETDFVAKNAEFQALADQIVAAAASSKAADVDALKAAKIGDTTVEQAIAELSAKIGEKLELRRVAHFDGTVEAYLHRRAADLPPAVGVLVEYQGSGKDSDKEAAHAVALQIAALKARYLSRDDVPEDVVASERRIAEETAKAEGKPEQALPKIVEGRLNGFFKDAVLLEQPSVSDSKKTVKALLDEAGVTVTRFVRFEVGQA.

Residues 76–79 (TDFV) form an involved in Mg(2+) ion dislocation from EF-Tu region.

Belongs to the EF-Ts family.

Its subcellular location is the cytoplasm. Its function is as follows. Associates with the EF-Tu.GDP complex and induces the exchange of GDP to GTP. It remains bound to the aminoacyl-tRNA.EF-Tu.GTP complex up to the GTP hydrolysis stage on the ribosome. The sequence is that of Elongation factor Ts from Mycobacterium avium (strain 104).